Consider the following 222-residue polypeptide: Protein GrpE (222 aa).

Residues 1–64 (MSDQNLGQGS…GEEILSDDDL (64 aa)) are disordered. The segment covering 16 to 44 (EEPIVRDKRRIDPETGKVREPQDLSHEEL) has biased composition (basic and acidic residues). Residues 54 to 64 (QGEEILSDDDL) are compositionally biased toward acidic residues.

This sequence belongs to the GrpE family. As to quaternary structure, homodimer.

Its subcellular location is the cytoplasm. In terms of biological role, participates actively in the response to hyperosmotic and heat shock by preventing the aggregation of stress-denatured proteins, in association with DnaK and GrpE. It is the nucleotide exchange factor for DnaK and may function as a thermosensor. Unfolded proteins bind initially to DnaJ; upon interaction with the DnaJ-bound protein, DnaK hydrolyzes its bound ATP, resulting in the formation of a stable complex. GrpE releases ADP from DnaK; ATP binding to DnaK triggers the release of the substrate protein, thus completing the reaction cycle. Several rounds of ATP-dependent interactions between DnaJ, DnaK and GrpE are required for fully efficient folding. This is Protein GrpE from Leifsonia xyli subsp. xyli (strain CTCB07).